Consider the following 128-residue polypeptide: V-type proton ATPase subunit F (128 aa).

This sequence belongs to the V-ATPase F subunit family. In terms of assembly, V-ATPase is a heteromultimeric enzyme composed of a peripheral catalytic V1 complex (components A to H) attached to an integral membrane V0 proton pore complex (components: a, c, c'', d and e).

The protein localises to the vacuole membrane. Its function is as follows. Subunit of the peripheral V1 complex of vacuolar ATPase essential for assembly or catalytic function. V-ATPase is responsible for acidifying a variety of intracellular compartments in eukaryotic cells. The sequence is that of V-type proton ATPase subunit F (VHA-F) from Arabidopsis thaliana (Mouse-ear cress).